Here is a 1785-residue protein sequence, read N- to C-terminus: Brefeldin A-inhibited guanine nucleotide-exchange protein 2 (1785 aa).

N-acetylmethionine is present on Met1. Residues 2-224 (QESQTKSMFV…KPQSPVIQAA (223 aa)) form a DCB; DCB:DCB domain and DCB:HUS domain interaction region. A phosphoserine mark is found at Ser214, Ser218, and Ser227. Positions 232-285 (RLKHSQAQSKPTTPEKTDLTNGEHARSDSGKVSTENGDAPRERGSSLSGTDDGA) are disordered. At Thr244 the chain carries Phosphothreonine. Positions 244-260 (TPEKTDLTNGEHARSDS) are enriched in basic and acidic residues. Phosphoserine occurs at positions 277, 348, and 349. The tract at residues 508-528 (ADAQCVVDIYVNYDCDLNAAN) is HUS; DCB:HUS domain interaction. At Ser614 the chain carries Phosphoserine. Thr616 is subject to Phosphothreonine. Phosphoserine is present on Ser617. A Phosphothreonine modification is found at Thr626. Residues 654-785 (FNKKPKRGIQ…IIMLTTDLHS (132 aa)) form the SEC7 domain. Residues Ser700, Ser1511, Ser1513, Ser1514, Ser1525, Ser1528, Ser1534, and Ser1782 each carry the phosphoserine modification. Residues 1514-1532 (SIDKNPSERGQSQLSNPTD) are compositionally biased toward polar residues. The interval 1514 to 1535 (SIDKNPSERGQSQLSNPTDDSW) is disordered.

As to quaternary structure, homodimer. Interacts with ARFGEF1/BIG1; both proteins are probably part of the same or very similar macromolecular complexes. Interacts with PRKAR1A, PRKAR2A, PRKAR1B, PRKAR2B, PPP1CC, PDE3A, TNFRSF1A, MYCBP and EXOC7. Interacts with GABRB1, GABRB2 and GABRB3. In vitro phosphorylated by PKA reducing its GEF activity and dephosphorylated by phosphatase PP1. As to expression, expressed in placenta, lung, heart, brain, kidney and pancreas.

It localises to the cytoplasm. The protein resides in the membrane. Its subcellular location is the golgi apparatus. It is found in the perinuclear region. The protein localises to the trans-Golgi network. It localises to the endosome. The protein resides in the cytoskeleton. Its subcellular location is the microtubule organizing center. It is found in the centrosome. The protein localises to the cell projection. It localises to the dendrite. The protein resides in the cytoplasmic vesicle. Its subcellular location is the synapse. Inhibited by brefeldin A. Functionally, promotes guanine-nucleotide exchange on ARF1 and ARF3 and to a lower extent on ARF5 and ARF6. Promotes the activation of ARF1/ARF5/ARF6 through replacement of GDP with GTP. Involved in the regulation of Golgi vesicular transport. Required for the integrity of the endosomal compartment. Involved in trafficking from the trans-Golgi network (TGN) to endosomes and is required for membrane association of the AP-1 complex and GGA1. Seems to be involved in recycling of the transferrin receptor from recycling endosomes to the plasma membrane. Probably is involved in the exit of GABA(A) receptors from the endoplasmic reticulum. Involved in constitutive release of tumor necrosis factor receptor 1 via exosome-like vesicles; the function seems to involve PKA and specifically PRKAR2B. Proposed to act as A kinase-anchoring protein (AKAP) and may mediate crosstalk between Arf and PKA pathways. This is Brefeldin A-inhibited guanine nucleotide-exchange protein 2 (ARFGEF2) from Homo sapiens (Human).